Reading from the N-terminus, the 502-residue chain is UTP--glucose-1-phosphate uridylyltransferase 2 (502 aa).

The disordered stretch occupies residues 1–20 (MMKPDLNSPLPQSPQLQAFG). Residues 9 to 20 (PLPQSPQLQAFG) are compositionally biased toward polar residues. UTP contacts are provided by residues 114–117 (LNGG), Lys-128, Gln-191, and Gly-220. Substrate is bound at residue 116–117 (GG). Substrate is bound by residues His-221 and 249–251 (NVD). 2 residues coordinate UTP: Asp-251 and Lys-390.

The protein belongs to the UDPGP type 1 family.

The enzyme catalyses alpha-D-glucose 1-phosphate + UTP + H(+) = UDP-alpha-D-glucose + diphosphate. In terms of biological role, plays a central role as a glucosyl donor in cellular metabolic pathways. The polypeptide is UTP--glucose-1-phosphate uridylyltransferase 2 (ugpB) (Dictyostelium discoideum (Social amoeba)).